We begin with the raw amino-acid sequence, 225 residues long: Ribonuclease HII (225 aa).

The RNase H type-2 domain occupies 28 to 220 (DIIAGTDEVG…VKEYVDISQE (193 aa)). Positions 34, 35, and 129 each coordinate a divalent metal cation.

This sequence belongs to the RNase HII family. Mn(2+) serves as cofactor. Requires Mg(2+) as cofactor.

Its subcellular location is the cytoplasm. The enzyme catalyses Endonucleolytic cleavage to 5'-phosphomonoester.. In terms of biological role, endonuclease that specifically degrades the RNA of RNA-DNA hybrids. The polypeptide is Ribonuclease HII (Desulfotalea psychrophila (strain LSv54 / DSM 12343)).